The chain runs to 954 residues: Isoleucine--tRNA ligase (954 aa).

Positions 58–68 (PYANGDIHIGH) match the 'HIGH' region motif. Residue Glu572 participates in L-isoleucyl-5'-AMP binding. A 'KMSKS' region motif is present at residues 613–617 (KMSKS). Residue Lys616 participates in ATP binding. Zn(2+)-binding residues include Cys917, Cys920, Cys937, and Cys940.

Belongs to the class-I aminoacyl-tRNA synthetase family. IleS type 1 subfamily. As to quaternary structure, monomer. Requires Zn(2+) as cofactor.

The protein localises to the cytoplasm. The enzyme catalyses tRNA(Ile) + L-isoleucine + ATP = L-isoleucyl-tRNA(Ile) + AMP + diphosphate. Its function is as follows. Catalyzes the attachment of isoleucine to tRNA(Ile). As IleRS can inadvertently accommodate and process structurally similar amino acids such as valine, to avoid such errors it has two additional distinct tRNA(Ile)-dependent editing activities. One activity is designated as 'pretransfer' editing and involves the hydrolysis of activated Val-AMP. The other activity is designated 'posttransfer' editing and involves deacylation of mischarged Val-tRNA(Ile). The protein is Isoleucine--tRNA ligase of Photobacterium profundum (strain SS9).